The following is a 66-amino-acid chain: MPKLKNHSGSKKRFKFTASGLVKAQAAGKRHGMSKRPQKMKRNARGTFVMFKADGEKIAENFLRVK.

The tract at residues Gln-25 to Arg-45 is disordered. Over residues Gly-28 to Ala-44 the composition is skewed to basic residues.

This sequence belongs to the bacterial ribosomal protein bL35 family.

The polypeptide is Large ribosomal subunit protein bL35 (Rhodospirillum centenum (strain ATCC 51521 / SW)).